A 307-amino-acid polypeptide reads, in one-letter code: MLIDAYGRRISSLRISLTNRCNLKCIYCHNEGEEDSGSEITVEEVAQIARICARYGVDKIKFSGGEPLLRRDFDEILRALPPMRDVSVTTNGTLLAARAESLKESGLDRVNVSLDSMDRDRFTFITQCKGQFDKVLDGIDAALSVGLTPVKINMVYLKGINEDEVDRMIDYVRGKPLVLQIIELMNFHGAFKYHADVASLEQRIKEKADKAVCREMHRRTKYYLGGAEVEIVRPIDNSEFCMNCNRLRITSDYKLKPCLLKNDNLVSVRGLSDAEVEAVLIKTVGAREPFFKSETAKVCQPYKIYEP.

The 223-residue stretch at 5 to 227 (AYGRRISSLR…RRTKYYLGGA (223 aa)) folds into the Radical SAM core domain. Arginine 14 is a GTP binding site. Residues cysteine 21 and cysteine 25 each coordinate [4Fe-4S] cluster. Tyrosine 27 contacts S-adenosyl-L-methionine. Cysteine 28 contributes to the [4Fe-4S] cluster binding site. A GTP-binding site is contributed by lysine 61. Glycine 65 contributes to the S-adenosyl-L-methionine binding site. Threonine 89 lines the GTP pocket. Serine 113 provides a ligand contact to S-adenosyl-L-methionine. Lysine 151 is a GTP binding site. Cysteine 241 and cysteine 244 together coordinate [4Fe-4S] cluster. Residue 246-248 (RLR) coordinates GTP. Cysteine 258 lines the [4Fe-4S] cluster pocket.

It belongs to the radical SAM superfamily. MoaA family. The cofactor is [4Fe-4S] cluster.

It catalyses the reaction GTP + AH2 + S-adenosyl-L-methionine = (8S)-3',8-cyclo-7,8-dihydroguanosine 5'-triphosphate + 5'-deoxyadenosine + L-methionine + A + H(+). It participates in cofactor biosynthesis; molybdopterin biosynthesis. In terms of biological role, catalyzes the cyclization of GTP to (8S)-3',8-cyclo-7,8-dihydroguanosine 5'-triphosphate. The polypeptide is Probable GTP 3',8-cyclase (Methanocella arvoryzae (strain DSM 22066 / NBRC 105507 / MRE50)).